The following is a 241-amino-acid chain: MFFNSLLTNFAALEVGQHLYWQIGNIRLHGQVFLTSWILLGALLVFISFGTKKMENDPKGLQNLLEFLWDYIRDLARTQIGEKVYRDWMPFIGTLFLFVFVSNWGGALIPWRLIKLPSGELGAPTADINTTIALALLVSLSYFYAGLSNKGWRYFEYYVHPTPIMLPFKILEDFTKPLSLSFRLFGNILADELVVGVLVFLVPLILPIPVMFLGLFTSAIQALIFATLAAYYIGEAVEEHH.

Transmembrane regions (helical) follow at residues 30–50 (GQVF…ISFG), 91–111 (FIGT…LIPW), 128–148 (INTT…AGLS), 193–213 (LVVG…VMFL), and 214–234 (GLFT…YYIG).

The protein belongs to the ATPase A chain family. In terms of assembly, F-type ATPases have 2 components, CF(1) - the catalytic core - and CF(0) - the membrane proton channel. CF(1) has five subunits: alpha(3), beta(3), gamma(1), delta(1), epsilon(1). CF(0) has four main subunits: a, b, b' and c.

It is found in the cellular thylakoid membrane. Functionally, key component of the proton channel; it plays a direct role in the translocation of protons across the membrane. This chain is ATP synthase subunit a, found in Prochlorococcus marinus (strain AS9601).